We begin with the raw amino-acid sequence, 197 residues long: MKDLTERQRKVLLFIEEFIEKNGYPPSVREIARRFRITPRGALLHLIALEKKGYIERKNGKPRALRVSKSIRNKIPLIGEIRAGEKREAVEYLEDYIEIPESFLSSGYDHFLLKVKGESMIEEHICDGDLVLVRRQDWAQNGDIVVAMVDGEVTLKKFYQRGDTVELRPANREMSSMFFKAEKVKILGKVVGVFRKL.

Positions 28-47 (VREIARRFRITPRGALLHLI) form a DNA-binding region, H-T-H motif. Residues Ser-119 and Lys-156 each act as for autocatalytic cleavage activity in the active site.

It belongs to the peptidase S24 family. In terms of assembly, homodimer.

It catalyses the reaction Hydrolysis of Ala-|-Gly bond in repressor LexA.. Functionally, represses a number of genes involved in the response to DNA damage (SOS response), including recA and lexA. In the presence of single-stranded DNA, RecA interacts with LexA causing an autocatalytic cleavage which disrupts the DNA-binding part of LexA, leading to derepression of the SOS regulon and eventually DNA repair. This is LexA repressor from Thermotoga petrophila (strain ATCC BAA-488 / DSM 13995 / JCM 10881 / RKU-1).